Reading from the N-terminus, the 476-residue chain is MELLYVCLVCVFVFLVSLLLLYKKKSGEGLPPGKTGWPVFGESLEFLSSGWKGHPEKFIFDRVAKYSSSVFKTHLLGEEAAVFCGASANKFLFSNENKLVQAWWPNSVNKVFPSSTQTSSKEEAIKMRKMLPNFFKPEALQRYVGIMDHITQRHFATGWENKEQVVVFPLTKRYTFWLACRLFLSVEDPKHVAKFADPFDVLASGLISIPIDLPGTPFNRAIKASNFIRKELVRIIKQRKIDLGEGKVSSTQDILSHMLLTCDENGKFLGDLDIADKILGLLIGGHDTASSACSFIVKYLAELPHIYQRVYTEQMEIAKSKGPGELLRWEDIQKMKYSWNVACEVLRLAPPLQGAFREALSDFMFNGFYIPKGWKIYWSANSTHKREEFFPDPEKFDPSRFEGSGPAPYTFVPFGGGPRMCPGKEYARLEILVFMHHLVKRFKFEKIIPHEKIIVNPMPIPANGLPLRLYPHHHNP.

The chain crosses the membrane as a helical span at residues 2–22; that stretch reads ELLYVCLVCVFVFLVSLLLLY. Cys421 serves as a coordination point for heme.

Belongs to the cytochrome P450 family. Heme serves as cofactor. As to expression, specifically expressed in roots.

The protein localises to the membrane. It catalyses the reaction beta-amyrin + 3 reduced [NADPH--hemoprotein reductase] + 3 O2 = oleanolate + 3 oxidized [NADPH--hemoprotein reductase] + 4 H2O + 4 H(+). In terms of biological role, catalyzes the carboxylation of beta-amyrin at the C-28 position to form oleanolate. Catalyzes the carboxylation of alpha-amyrin at the C-28 position to form ursolate. The sequence is that of Beta-amyrin 28-monooxygenase (CYP716A44) from Solanum lycopersicum (Tomato).